Here is a 145-residue protein sequence, read N- to C-terminus: Transcriptional regulator MraZ (145 aa).

2 consecutive SpoVT-AbrB domains span residues threonine 5 to glutamate 49 and threonine 78 to valine 121.

Belongs to the MraZ family. In terms of assembly, forms oligomers.

The protein resides in the cytoplasm. Its subcellular location is the nucleoid. The protein is Transcriptional regulator MraZ of Ureaplasma parvum serovar 3 (strain ATCC 27815 / 27 / NCTC 11736).